We begin with the raw amino-acid sequence, 399 residues long: 1-deoxy-D-xylulose 5-phosphate reductoisomerase (399 aa).

The NADPH site is built by threonine 13, glycine 14, serine 15, isoleucine 16, and asparagine 127. Lysine 128 provides a ligand contact to 1-deoxy-D-xylulose 5-phosphate. Glutamate 129 contacts NADPH. Aspartate 153 contributes to the Mn(2+) binding site. Serine 154, glutamate 155, serine 187, and histidine 210 together coordinate 1-deoxy-D-xylulose 5-phosphate. Glutamate 155 is a binding site for Mn(2+). Glycine 216 provides a ligand contact to NADPH. Positions 223, 228, 229, and 232 each coordinate 1-deoxy-D-xylulose 5-phosphate. Glutamate 232 serves as a coordination point for Mn(2+).

This sequence belongs to the DXR family. Mg(2+) is required as a cofactor. Mn(2+) serves as cofactor.

It carries out the reaction 2-C-methyl-D-erythritol 4-phosphate + NADP(+) = 1-deoxy-D-xylulose 5-phosphate + NADPH + H(+). It functions in the pathway isoprenoid biosynthesis; isopentenyl diphosphate biosynthesis via DXP pathway; isopentenyl diphosphate from 1-deoxy-D-xylulose 5-phosphate: step 1/6. Its function is as follows. Catalyzes the NADPH-dependent rearrangement and reduction of 1-deoxy-D-xylulose-5-phosphate (DXP) to 2-C-methyl-D-erythritol 4-phosphate (MEP). This chain is 1-deoxy-D-xylulose 5-phosphate reductoisomerase, found in Bordetella pertussis (strain Tohama I / ATCC BAA-589 / NCTC 13251).